The sequence spans 445 residues: Asparagine--tRNA ligase (445 aa).

This sequence belongs to the class-II aminoacyl-tRNA synthetase family. Homodimer.

The protein resides in the cytoplasm. The catalysed reaction is tRNA(Asn) + L-asparagine + ATP = L-asparaginyl-tRNA(Asn) + AMP + diphosphate + H(+). The polypeptide is Asparagine--tRNA ligase (Deinococcus deserti (strain DSM 17065 / CIP 109153 / LMG 22923 / VCD115)).